The chain runs to 100 residues: Urease subunit gamma (100 aa).

Belongs to the urease gamma subunit family. As to quaternary structure, heterotrimer of UreA (gamma), UreB (beta) and UreC (alpha) subunits. Three heterotrimers associate to form the active enzyme.

The protein resides in the cytoplasm. The enzyme catalyses urea + 2 H2O + H(+) = hydrogencarbonate + 2 NH4(+). Its pathway is nitrogen metabolism; urea degradation; CO(2) and NH(3) from urea (urease route): step 1/1. Its function is as follows. Ureolysis may allow urea to be employed as a nitrogen source for growth and produces ammonia which may protect from killing at low pH. The protein is Urease subunit gamma of Streptococcus salivarius (strain 57.I).